The sequence spans 60 residues: LKCNQLIPPFWKTCPKGKNLCYKMTMRAAPMVPVKRGCIDVCPKSSLLIKYMCCNTDKCN.

Cystine bridges form between cysteine 3/cysteine 21, cysteine 14/cysteine 38, cysteine 42/cysteine 53, and cysteine 54/cysteine 59.

Belongs to the three-finger toxin family. Short-chain subfamily. Type IA cytotoxin sub-subfamily. Monomer in solution; Homodimer and oligomer in the presence of negatively charged lipids forming a pore with a size ranging between 20 and 30 angstroms. As to expression, expressed by the venom gland.

It localises to the secreted. Its subcellular location is the target cell membrane. Functionally, basic protein that binds to cell membrane and depolarizes cardiomyocytes. This cytotoxin also possesses lytic activity on many other cells, including red blood cells. Interaction with sulfatides in the cell membrane induces pore formation and cell internalization and is responsible for cytotoxicity in cardiomyocytes. It targets the mitochondrial membrane and induces mitochondrial swelling and fragmentation. Inhibits protein kinases C. It binds to the integrin alpha-V/beta-3 with a moderate affinity. The polypeptide is Cytotoxin 1 (Naja pallida (Red spitting cobra)).